We begin with the raw amino-acid sequence, 135 residues long: ATP synthase epsilon chain (135 aa).

The protein belongs to the ATPase epsilon chain family. F-type ATPases have 2 components, CF(1) - the catalytic core - and CF(0) - the membrane proton channel. CF(1) has five subunits: alpha(3), beta(3), gamma(1), delta(1), epsilon(1). CF(0) has three main subunits: a, b and c.

The protein resides in the cell inner membrane. Produces ATP from ADP in the presence of a proton gradient across the membrane. In Rhizobium etli (strain ATCC 51251 / DSM 11541 / JCM 21823 / NBRC 15573 / CFN 42), this protein is ATP synthase epsilon chain.